The chain runs to 278 residues: HTH-type transcriptional activator RhaS (278 aa).

The 99-residue stretch at 174–272 (NLLLAWLEDH…NWSPRDIRQG (99 aa)) folds into the HTH araC/xylS-type domain. 2 consecutive DNA-binding regions (H-T-H motif) follow at residues 191-212 (DAVA…KQQT) and 239-262 (VTDI…RREF).

In terms of assembly, binds DNA as a dimer.

It localises to the cytoplasm. Functionally, activates expression of the rhaBAD and rhaT operons. The protein is HTH-type transcriptional activator RhaS of Escherichia coli (strain SMS-3-5 / SECEC).